The chain runs to 277 residues: Large ribosomal subunit protein uL2 (277 aa).

Disordered stretches follow at residues lysine 32–glycine 58 and valine 225–asparagine 277.

Belongs to the universal ribosomal protein uL2 family. In terms of assembly, part of the 50S ribosomal subunit. Forms a bridge to the 30S subunit in the 70S ribosome.

In terms of biological role, one of the primary rRNA binding proteins. Required for association of the 30S and 50S subunits to form the 70S ribosome, for tRNA binding and peptide bond formation. It has been suggested to have peptidyltransferase activity; this is somewhat controversial. Makes several contacts with the 16S rRNA in the 70S ribosome. This is Large ribosomal subunit protein uL2 from Borrelia recurrentis (strain A1).